We begin with the raw amino-acid sequence, 573 residues long: Sterol esterase 1 (573 aa).

Residues Met1–Asn12 are Cytoplasmic-facing. The stretch at Leu13–His33 is an intramembrane region. Residues His34–Ala573 lie on the Cytoplasmic side of the membrane. Catalysis depends on Ser315, which acts as the Nucleophile. Residues Asp489 and His520 each act as charge relay system in the active site.

It belongs to the AB hydrolase superfamily. In terms of processing, not N-glycosylated.

The protein resides in the lipid droplet. Its subcellular location is the membrane. The catalysed reaction is a sterol ester + H2O = a sterol + a fatty acid + H(+). In terms of biological role, mediates the hydrolysis of steryl esters, thereby playing a central role in lipid metabolism. Under heme-deficient conditions, it constitutes the major steryl ester hydrolase, suggesting that it plays a central role in mobilization of steryl esters under anaerobic conditions. The chain is Sterol esterase 1 (YEH1) from Saccharomyces cerevisiae (strain ATCC 204508 / S288c) (Baker's yeast).